Reading from the N-terminus, the 717-residue chain is Probable inactive histone-lysine N-methyltransferase SUVR2 (717 aa).

Residues Gln-61–Glu-73 show a composition bias toward basic and acidic residues. The disordered stretch occupies residues Gln-61–Ser-136. Residues Ser-120–Pro-130 show a composition bias toward low complexity. The Zn(2+) site is built by Cys-445, Cys-446, Cys-449, Cys-453, Cys-462, Cys-529, Cys-533, Cys-535, and Cys-539. The Pre-SET domain occupies Met-458–Gly-547. The SET domain maps to Asn-550–Gly-679. S-adenosyl-L-methionine-binding positions include Arg-561–Trp-563 and Asn-635–His-636. Zn(2+) is bound at residue Cys-638. Tyr-678 serves as a coordination point for S-adenosyl-L-methionine. A Post-SET domain is found at Ser-690–Gln-706. Zn(2+) contacts are provided by Cys-694, Cys-696, and Cys-701.

Belongs to the class V-like SAM-binding methyltransferase superfamily. Histone-lysine methyltransferase family. Interacts with SUVR1, CHR19, CHR28 and itself. Interacts with CHR27.

Its subcellular location is the nucleus. It is found in the chromosome. Functionally, probable inactive histone-lysine methyltransferase that acts as regulator of transctiptional gene silencing independently of histone H3K9 methylation. Contributes to transcriptional gene silencing at RNA-directed DNA methylation (RdDM) target loci but also at RdDM-independent target loci. Forms a complex with SUVR1 and associates with the SNF2-related chromatin-remodeling proteins CHR19, CHR27, and CHR28, thereby mediating nucleosome positioning and transcriptional silencing. Does not possess histone-lysine methyltransferase activity in vitro, and the conserved catalytic sites of SUVR2 are dispensable for its function in transcriptional gene silencing. The protein is Probable inactive histone-lysine N-methyltransferase SUVR2 (SUVR2) of Arabidopsis thaliana (Mouse-ear cress).